Here is a 519-residue protein sequence, read N- to C-terminus: Zinc finger and BTB domain-containing protein 18.3 (519 aa).

Residues 24–91 (CDCTVLVGDA…MYEGKLQFKD (68 aa)) enclose the BTB domain. The tract at residues 189–227 (ASIPQTGGEVDTHTTAAGKTADSPCSSTGSLSHRSATSM) is disordered. Residues 201 to 227 (HTTAAGKTADSPCSSTGSLSHRSATSM) are compositionally biased toward polar residues. 4 consecutive C2H2-type zinc fingers follow at residues 367-389 (FMCPLCNKVFPSPHILQIHLSTH), 407-429 (PTCSLCGKTFSCMYTLKRHERTH), 435-457 (FTCTQCGKSFQYSHNLSRHAVVH), and 463-486 (HACKWCERRFTQSGDLYRHIRKFH).

Belongs to the krueppel C2H2-type zinc-finger protein family. ZBTB18 subfamily.

The protein resides in the nucleus. Functionally, transcriptional repressor that plays a role in various developmental processes. Specifically binds the consensus DNA sequence 5'-[AC]ACATCTG[GT][AC]-3' which contains the E box core, and acts by recruiting chromatin remodeling multiprotein complexes. In Xenopus laevis (African clawed frog), this protein is Zinc finger and BTB domain-containing protein 18.3 (zbtb18.3).